The following is a 294-amino-acid chain: MEKILVTISTGAASFAVLAVLFTIPSLYNTINEVHDEVLDGVSVFRVETDSAWTEMMDIQITVTPPTKPRVNPFNSIFRQKRQTFSGLPAWCQCEPTKPTCPPGPPGPPGQPGQPGTPGAPGPKGEDNTSTYAPITCAPVSQDCVKCPQGPAGPEGPAGPAGPAGPDGQPGAPGNAGNPGSDGQPGAPGDDGQPGAPGQDGQPGAPGQDGQRGSGAPGAPGAPGNAGPAGPAGQDGAPGQDGQPGPAGPAGQDGAPGNAGSDGQPGAPGGPGLPGNDAAYCACPPRSAVFVSRH.

A signal peptide spans 1 to 30 (MEKILVTISTGAASFAVLAVLFTIPSLYNT). Residues 100–112 (TCPPGPPGPPGQP) are compositionally biased toward pro residues. Disordered regions lie at residues 100–134 (TCPPGPPGPPGQPGQPGTPGAPGPKGEDNTSTYAP) and 148–278 (PQGP…GNDA). Triple-helical region regions lie at residues 102 to 127 (PPGPPGPPGQPGQPGTPGAPGPKGED) and 153 to 274 (GPEG…PGLP). Low complexity-rich tracts occupy residues 164 to 209 (AGPD…PGQD) and 219 to 265 (APGA…DGQP).

Collagen polypeptide chains are complexed within the cuticle by disulfide bonds and other types of covalent cross-links.

In terms of biological role, nematode cuticles are composed largely of collagen-like proteins. The cuticle functions both as an exoskeleton and as a barrier to protect the worm from its environment. This is Cuticle collagen 144 from Caenorhabditis briggsae.